Consider the following 196-residue polypeptide: Probable malonic semialdehyde reductase RutE (196 aa).

The protein belongs to the nitroreductase family. HadB/RutE subfamily. Requires FMN as cofactor.

The enzyme catalyses 3-hydroxypropanoate + NADP(+) = 3-oxopropanoate + NADPH + H(+). In terms of biological role, may reduce toxic product malonic semialdehyde to 3-hydroxypropionic acid, which is excreted. This Shigella flexneri serotype 5b (strain 8401) protein is Probable malonic semialdehyde reductase RutE.